The following is a 609-amino-acid chain: Replication protein A 70 kDa DNA-binding subunit (609 aa).

The tract at residues Ile-112–Ser-164 is disordered. The span at Pro-124–Ser-151 shows a compositional bias: pro residues. The segment at residues Trp-189–Asn-273 is a DNA-binding region (OB). The segment at Cys-472–Cys-494 adopts a C4-type zinc-finger fold.

It belongs to the replication factor A protein 1 family. In terms of assembly, component of the heterotrimeric canonical replication protein A complex (RPA). Interacts with rpain-a.

Its subcellular location is the nucleus. It is found in the PML body. Its function is as follows. As part of the heterotrimeric replication protein A complex (RPA/RP-A), binds and stabilizes single-stranded DNA intermediates, that form during DNA replication or upon DNA stress. It prevents their reannealing and in parallel, recruits and activates different proteins and complexes involved in DNA metabolism. Thereby, it plays an essential role both in DNA replication and the cellular response to DNA damage. The sequence is that of Replication protein A 70 kDa DNA-binding subunit (rpa1) from Xenopus tropicalis (Western clawed frog).